The primary structure comprises 126 residues: Large ribosomal subunit protein bL19 (126 aa).

The protein belongs to the bacterial ribosomal protein bL19 family.

This protein is located at the 30S-50S ribosomal subunit interface and may play a role in the structure and function of the aminoacyl-tRNA binding site. The chain is Large ribosomal subunit protein bL19 from Bordetella bronchiseptica (strain ATCC BAA-588 / NCTC 13252 / RB50) (Alcaligenes bronchisepticus).